The following is a 412-amino-acid chain: DNA utilization protein HofQ (412 aa).

The N-terminal stretch at 1–18 (MKQWIAALLLMLIPGVQA) is a signal peptide.

Belongs to the bacterial secretin family. PilQ subfamily.

It is found in the cell outer membrane. Functionally, required for the use of extracellular DNA as a nutrient. Could be the porin responsible for transport of DNA across the outer membrane. The sequence is that of DNA utilization protein HofQ (hofQ) from Escherichia coli (strain K12).